A 514-amino-acid chain; its full sequence is Serine--tRNA ligase, cytoplasmic (514 aa).

N-acetylmethionine is present on methionine 1. Positions arginine 9–serine 61 are interaction with tRNA. Serine 241 carries the phosphoserine modification. The L-serine site is built by threonine 271 and arginine 302. Residues arginine 302–glutamate 304 and valine 318–phenylalanine 321 contribute to the ATP site. Position 323 is an N6-acetyllysine (lysine 323). Glutamate 325 is a binding site for L-serine. Glutamate 391–serine 394 is an ATP binding site. Asparagine 427 contacts L-serine. The tract at residues lysine 472–alanine 514 is disordered. Residues glutamate 479–leucine 502 are compositionally biased toward basic and acidic residues. The Nuclear localization signal motif lies at lysine 482–lysine 494. The span at asparagine 504 to alanine 514 shows a compositional bias: polar residues.

It belongs to the class-II aminoacyl-tRNA synthetase family. Type-1 seryl-tRNA synthetase subfamily. As to quaternary structure, homodimer. The tRNA molecule may bind across the dimer. Interacts with SIRT2. Interacts with METTL6; interaction is required for the tRNA N(3)-methylcytidine methyltransferase activity of METTL6.

It is found in the cytoplasm. It localises to the nucleus. It carries out the reaction tRNA(Ser) + L-serine + ATP = L-seryl-tRNA(Ser) + AMP + diphosphate + H(+). The enzyme catalyses tRNA(Sec) + L-serine + ATP = L-seryl-tRNA(Sec) + AMP + diphosphate + H(+). It participates in aminoacyl-tRNA biosynthesis; selenocysteinyl-tRNA(Sec) biosynthesis; L-seryl-tRNA(Sec) from L-serine and tRNA(Sec): step 1/1. In terms of biological role, catalyzes the attachment of serine to tRNA(Ser) in a two-step reaction: serine is first activated by ATP to form Ser-AMP and then transferred to the acceptor end of tRNA(Ser). Is probably also able to aminoacylate tRNA(Sec) with serine, to form the misacylated tRNA L-seryl-tRNA(Sec), which will be further converted into selenocysteinyl-tRNA(Sec). In the nucleus, binds to the VEGFA core promoter and prevents MYC binding and transcriptional activation by MYC. Recruits SIRT2 to the VEGFA promoter, promoting deacetylation of histone H4 at 'Lys-16' (H4K16). Thereby, inhibits the production of VEGFA and sprouting angiogenesis mediated by VEGFA. The chain is Serine--tRNA ligase, cytoplasmic (SARS1) from Oryctolagus cuniculus (Rabbit).